The primary structure comprises 947 residues: DNA mismatch repair protein MutS (947 aa).

An ATP-binding site is contributed by 620 to 627; that stretch reads GPNMSGKS.

The protein belongs to the DNA mismatch repair MutS family.

Functionally, this protein is involved in the repair of mismatches in DNA. It is possible that it carries out the mismatch recognition step. This protein has a weak ATPase activity. This chain is DNA mismatch repair protein MutS, found in Clostridioides difficile (strain 630) (Peptoclostridium difficile).